Here is a 693-residue protein sequence, read N- to C-terminus: TGF-beta-activated kinase 1 and MAP3K7-binding protein 2 (693 aa).

In terms of domain architecture, CUE spans 8–51 (IDFQVLHDLRQKFPEVPEVVVSRCMLQNNNNLDACCAVLSQEST). Residues 91-130 (GREGSRMNGSRTLTHSISDGQLQGGQSNSELFQQEPQTAP) are disordered. Residues 97-130 (MNGSRTLTHSISDGQLQGGQSNSELFQQEPQTAP) are compositionally biased toward polar residues. An Asymmetric dimethylarginine modification is found at arginine 173. Residues 219-310 (ITTPGGTTRQ…SGSSQSSAHS (92 aa)) form a disordered region. A compositionally biased stretch (low complexity) spans 220-231 (TTPGGTTRQTQQ). Residues 232–282 (HSGWVSQFNPMNPQQVYQPSQPGPWTTCPASNPLSHTSSQQPNQQGHQTSH) are compositionally biased toward polar residues. Residues 286 to 310 (PISSPTTSQPPTIHSSGSSQSSAHS) show a composition bias toward low complexity. A Glycyl lysine isopeptide (Lys-Gly) (interchain with G-Cter in SUMO) cross-link involves residue lysine 329. The segment at 330–381 (LEPPQRNNSSKLRSSGPRTSSTSSSVNSQTLNRNQPTVYIAASPPNTDELMS) is disordered. Over residues 343–359 (SSGPRTSSTSSSVNSQT) the composition is skewed to low complexity. Residues serine 372, serine 450, serine 482, and serine 524 each carry the phosphoserine modification. Residues 532–619 (YTQALLVHQK…TKEIDLFQAR (88 aa)) adopt a coiled-coil conformation. Lysine 562 participates in a covalent cross-link: Glycyl lysine isopeptide (Lys-Gly) (interchain with G-Cter in SUMO). Phosphoserine is present on serine 582. Lysine 611 is covalently cross-linked (Glycyl lysine isopeptide (Lys-Gly) (interchain with G-Cter in ubiquitin)). A disordered region spans residues 642–663 (PPKPKDQRSIIKTPKTQDTEDD). A RanBP2-type zinc finger spans residues 663–693 (DEGAQWNCTACTFLNHPALIRCEQCEMPRHF). Cysteine 673 carries the (Microbial infection) S-methylcysteine modification. An interaction with polyubiquitin region spans residues 675–685 (FLNHPALIRCE).

As to quaternary structure, interacts with MAP3K7 and TRAF6. Identified in the TRIKA2 complex composed of MAP3K7, TAB1 and TAB2. Binds 'Lys-63'-linked polyubiquitin chains. Interacts with NCOR1 and HDAC3 to form a ternary complex. Interacts (via C-terminal) with NUMBL (via PTB domain). Interacts (via the C-terminus) with DYNC2I2 (via WD domains). Interacts with RBCK1. Interacts with TRIM5. Interacts with TRIM38 (via B30.2/SPRY domain), leading to its translocation to lysosomes and degradation. Interacts with ASB1; this interaction promotes TAB2 stability. Post-translationally, degraded in a lysosome-dependent manner following interaction with TRIM38. SUMOylated by TRIM60; leading to inhibition of MAPK/NF-kappaB activation and the innate immune response. In terms of processing, ubiquitinated; following IL1 stimulation or TRAF6 overexpression. Ubiquitination involves RBCK1 leading to proteasomal degradation. Ubiquitinated at Lys-611 by TRIM45 leading to proteasomal degradation. Post-translationally, phosphorylated. (Microbial infection) Methylated at Cys-673 by enteropathogenic E.coli protein NleE or S.flexneri protein OspZ: methylation disrupts zinc-binding and ability to bind 'Lys-63'-linked ubiquitin, leading to NF-kappa-B inactivation. Widely expressed. In the embryo, expressed in the ventricular trabeculae, endothelial cells of the conotruncal cushions of the outflow tract and in the endothelial cells lining the developing aortic valves.

The protein localises to the membrane. It is found in the endosome membrane. The protein resides in the lysosome membrane. Its subcellular location is the cytoplasm. It localises to the cytosol. In terms of biological role, adapter required to activate the JNK and NF-kappa-B signaling pathways through the specific recognition of 'Lys-63'-linked polyubiquitin chains by its RanBP2-type zinc finger (NZF). Acts as an adapter linking MAP3K7/TAK1 and TRAF6 to 'Lys-63'-linked polyubiquitin chains. The RanBP2-type zinc finger (NZF) specifically recognizes Lys-63'-linked polyubiquitin chains unanchored or anchored to the substrate proteins such as RIPK1/RIP1 and RIPK2: this acts as a scaffold to organize a large signaling complex to promote autophosphorylation of MAP3K7/TAK1, and subsequent activation of I-kappa-B-kinase (IKK) core complex by MAP3K7/TAK1. Also recognizes and binds Lys-63'-linked polyubiquitin chains of heterotypic 'Lys-63'-/'Lys-48'-linked branched ubiquitin chains. Regulates the IL1-mediated translocation of NCOR1 out of the nucleus. Involved in heart development. The chain is TGF-beta-activated kinase 1 and MAP3K7-binding protein 2 from Homo sapiens (Human).